Consider the following 274-residue polypeptide: 2-dehydro-3-deoxyphosphooctonate aldolase (274 aa).

This sequence belongs to the KdsA family.

Its subcellular location is the cytoplasm. The catalysed reaction is D-arabinose 5-phosphate + phosphoenolpyruvate + H2O = 3-deoxy-alpha-D-manno-2-octulosonate-8-phosphate + phosphate. It functions in the pathway carbohydrate biosynthesis; 3-deoxy-D-manno-octulosonate biosynthesis; 3-deoxy-D-manno-octulosonate from D-ribulose 5-phosphate: step 2/3. It participates in bacterial outer membrane biogenesis; lipopolysaccharide biosynthesis. This chain is 2-dehydro-3-deoxyphosphooctonate aldolase, found in Rickettsia typhi (strain ATCC VR-144 / Wilmington).